The primary structure comprises 275 residues: Thioredoxin-like 1-1, chloroplastic (275 aa).

The N-terminal 72 residues, 1–72, are a transit peptide targeting the chloroplast; it reads MTEVISKTSL…GDSQDESFRR (72 aa). Residues 73-206 enclose the Thioredoxin domain; that stretch reads SSAITAQTTL…FRDALAKHGP (134 aa). Catalysis depends on nucleophile residues cysteine 129 and cysteine 132. The cysteines at positions 129 and 132 are disulfide-linked. A disordered region spans residues 238–275; the sequence is KPVPVEKEAATPDSNPSLPVPLPSMSSNDEKTLVSAGR. Low complexity predominate over residues 249-264; the sequence is PDSNPSLPVPLPSMSS.

Belongs to the thioredoxin family.

The protein resides in the plastid. It is found in the chloroplast. In terms of biological role, thiol-disulfide oxidoreductase that may participate in various redox reactions. Possesses insulin disulfide bonds reducing activity. This chain is Thioredoxin-like 1-1, chloroplastic, found in Arabidopsis thaliana (Mouse-ear cress).